We begin with the raw amino-acid sequence, 952 residues long: Protein translocase subunit SecA (952 aa).

ATP-binding positions include Gln104, 122–126 (GEGKT), and Asp512.

It belongs to the SecA family. In terms of assembly, monomer and homodimer. Part of the essential Sec protein translocation apparatus which comprises SecA, SecYEG and auxiliary proteins SecDF. Other proteins may also be involved.

The protein localises to the cell inner membrane. It localises to the cytoplasm. The catalysed reaction is ATP + H2O + cellular proteinSide 1 = ADP + phosphate + cellular proteinSide 2.. Functionally, part of the Sec protein translocase complex. Interacts with the SecYEG preprotein conducting channel. Has a central role in coupling the hydrolysis of ATP to the transfer of proteins into and across the cell membrane, serving as an ATP-driven molecular motor driving the stepwise translocation of polypeptide chains across the membrane. The protein is Protein translocase subunit SecA of Gloeobacter violaceus (strain ATCC 29082 / PCC 7421).